The chain runs to 373 residues: Anhydro-N-acetylmuramic acid kinase (373 aa).

An ATP-binding site is contributed by 12 to 19 (GTSLDGVD).

Belongs to the anhydro-N-acetylmuramic acid kinase family.

The catalysed reaction is 1,6-anhydro-N-acetyl-beta-muramate + ATP + H2O = N-acetyl-D-muramate 6-phosphate + ADP + H(+). It functions in the pathway amino-sugar metabolism; 1,6-anhydro-N-acetylmuramate degradation. Its pathway is cell wall biogenesis; peptidoglycan recycling. In terms of biological role, catalyzes the specific phosphorylation of 1,6-anhydro-N-acetylmuramic acid (anhMurNAc) with the simultaneous cleavage of the 1,6-anhydro ring, generating MurNAc-6-P. Is required for the utilization of anhMurNAc either imported from the medium or derived from its own cell wall murein, and thus plays a role in cell wall recycling. This chain is Anhydro-N-acetylmuramic acid kinase, found in Salmonella dublin (strain CT_02021853).